We begin with the raw amino-acid sequence, 217 residues long: Probable transaldolase (217 aa).

The active-site Schiff-base intermediate with substrate is the lysine 83.

Belongs to the transaldolase family. Type 3B subfamily.

It localises to the cytoplasm. It carries out the reaction D-sedoheptulose 7-phosphate + D-glyceraldehyde 3-phosphate = D-erythrose 4-phosphate + beta-D-fructose 6-phosphate. Its pathway is carbohydrate degradation; pentose phosphate pathway; D-glyceraldehyde 3-phosphate and beta-D-fructose 6-phosphate from D-ribose 5-phosphate and D-xylulose 5-phosphate (non-oxidative stage): step 2/3. Its function is as follows. Transaldolase is important for the balance of metabolites in the pentose-phosphate pathway. This Erythrobacter litoralis (strain HTCC2594) protein is Probable transaldolase.